A 352-amino-acid chain; its full sequence is Aromatic amino acid aminotransferase (352 aa).

Lys217 bears the N6-(pyridoxal phosphate)lysine mark.

It belongs to the class-II pyridoxal-phosphate-dependent aminotransferase family. Homodimer. The cofactor is pyridoxal 5'-phosphate.

The enzyme catalyses an aromatic L-alpha-amino acid + 2-oxoglutarate = an aromatic oxo-acid + L-glutamate. Aminotransferase that catalyzes the conversion of aromatic amino acids and 2-oxoglutarate into corresponding aromatic oxo acids and L-glutamate. This is Aromatic amino acid aminotransferase from Cutibacterium acnes (strain DSM 16379 / KPA171202) (Propionibacterium acnes).